The primary structure comprises 185 residues: Large ribosomal subunit protein uL5m (185 aa).

This sequence belongs to the universal ribosomal protein uL5 family.

The protein localises to the mitochondrion. The polypeptide is Large ribosomal subunit protein uL5m (RPL5) (Brassica napus (Rape)).